Consider the following 141-residue polypeptide: MAKKVAQVIKLQIPAGKATPAPPVGPALGQHGVNIMSFCKEFNEQTANQEGMLIPVEITVYEDRSFTFITKTPPAAVLLKKAAGIDKASGEPNKNKVATVGKDKVKEIAELKMQDMNASDLDAAMKMVEGTARSMGIIVEG.

Belongs to the universal ribosomal protein uL11 family. In terms of assembly, part of the ribosomal stalk of the 50S ribosomal subunit. Interacts with L10 and the large rRNA to form the base of the stalk. L10 forms an elongated spine to which L12 dimers bind in a sequential fashion forming a multimeric L10(L12)X complex. In terms of processing, one or more lysine residues are methylated.

In terms of biological role, forms part of the ribosomal stalk which helps the ribosome interact with GTP-bound translation factors. This chain is Large ribosomal subunit protein uL11, found in Natranaerobius thermophilus (strain ATCC BAA-1301 / DSM 18059 / JW/NM-WN-LF).